We begin with the raw amino-acid sequence, 105 residues long: Large ribosomal subunit protein eL42z/eL42y (105 aa).

A disordered region spans residues 28–57 (YKKGKDSLAAQGKRRYDRKQSGYGGQTKPV).

It belongs to the eukaryotic ribosomal protein eL42 family.

This is Large ribosomal subunit protein eL42z/eL42y (RPL36AA) from Arabidopsis thaliana (Mouse-ear cress).